A 309-amino-acid chain; its full sequence is Porphobilinogen deaminase (309 aa).

The residue at position 240 (cysteine 240) is an S-(dipyrrolylmethanemethyl)cysteine.

It belongs to the HMBS family. Monomer. Dipyrromethane serves as cofactor.

It carries out the reaction 4 porphobilinogen + H2O = hydroxymethylbilane + 4 NH4(+). Its pathway is porphyrin-containing compound metabolism; protoporphyrin-IX biosynthesis; coproporphyrinogen-III from 5-aminolevulinate: step 2/4. In terms of biological role, tetrapolymerization of the monopyrrole PBG into the hydroxymethylbilane pre-uroporphyrinogen in several discrete steps. This is Porphobilinogen deaminase from Brevibacillus brevis (strain 47 / JCM 6285 / NBRC 100599).